Here is a 908-residue protein sequence, read N- to C-terminus: NADH-quinone oxidoreductase subunit G (908 aa).

The 2Fe-2S ferredoxin-type domain occupies 2 to 83 (ATIHVDGKEY…GTFISIDDEE (82 aa)). Positions 34, 45, 48, and 67 each coordinate [2Fe-2S] cluster. The region spanning 83 to 122 (EAKQFRESVVEWLMTNHPHDCPVCEEGGNCHLQDMTVMTG) is the 4Fe-4S His(Cys)3-ligated-type domain. Residues His-99, Cys-103, Cys-106, Cys-112, Cys-151, Cys-154, Cys-157, Cys-201, Cys-228, Cys-231, Cys-235, and Cys-263 each contribute to the [4Fe-4S] cluster site. Residues 221-277 (MQFAPSICQQCSIGCNISPGERYGELRRIENRYNGTVNHYFLCDRGRFGYGYVNLKD) form the 4Fe-4S Mo/W bis-MGD-type domain.

It belongs to the complex I 75 kDa subunit family. Composed of 13 different subunits. Subunits NuoCD, E, F, and G constitute the peripheral sector of the complex. The cofactor is [2Fe-2S] cluster. [4Fe-4S] cluster serves as cofactor.

It carries out the reaction a quinone + NADH + 5 H(+)(in) = a quinol + NAD(+) + 4 H(+)(out). Functionally, NDH-1 shuttles electrons from NADH, via FMN and iron-sulfur (Fe-S) centers, to quinones in the respiratory chain. The immediate electron acceptor for the enzyme in this species is believed to be ubiquinone. Couples the redox reaction to proton translocation (for every two electrons transferred, four hydrogen ions are translocated across the cytoplasmic membrane), and thus conserves the redox energy in a proton gradient. The protein is NADH-quinone oxidoreductase subunit G (nuoG) of Shigella flexneri.